Consider the following 698-residue polypeptide: Polyribonucleotide nucleotidyltransferase (698 aa).

Mg(2+) contacts are provided by Asp-485 and Asp-491. One can recognise a KH domain in the interval 552–611 (PRITTIKINPEKIRDVIGKGGAVIRALTEETGTTIELDDDGTVKIASSNGEATKEAIRRI). The S1 motif domain occupies 621 to 689 (GRVYNGKVIR…RQGRVRLSIK (69 aa)).

It belongs to the polyribonucleotide nucleotidyltransferase family. As to quaternary structure, component of the RNA degradosome, which is a multiprotein complex involved in RNA processing and mRNA degradation. Mg(2+) serves as cofactor.

It is found in the cytoplasm. The enzyme catalyses RNA(n+1) + phosphate = RNA(n) + a ribonucleoside 5'-diphosphate. In terms of biological role, involved in mRNA degradation. Catalyzes the phosphorolysis of single-stranded polyribonucleotides processively in the 3'- to 5'-direction. This is Polyribonucleotide nucleotidyltransferase from Shewanella denitrificans (strain OS217 / ATCC BAA-1090 / DSM 15013).